Consider the following 526-residue polypeptide: Non-reducing end alpha-L-arabinofuranosidase BoGH43A (526 aa).

The N-terminal stretch at 1-20 is a signal peptide; the sequence is MRNALFLIFISLCSVCKSSA. The active-site Proton acceptor is D34. Catalysis depends on E189, which acts as the Proton donor.

Belongs to the glycosyl hydrolase 43 family.

The protein resides in the periplasm. It catalyses the reaction Hydrolysis of terminal non-reducing alpha-L-arabinofuranoside residues in alpha-L-arabinosides.. It participates in glucan metabolism; xyloglucan degradation. Functionally, alpha-L-arabinofuranosidase involved in xyloglucan degradation by mediating the cleavage of terminal non-reducing alpha-L-arabinofuranoside residues in xyloglucan branches, converting the 'S' units to 'X' units. The protein is Non-reducing end alpha-L-arabinofuranosidase BoGH43A of Bacteroides ovatus (strain ATCC 8483 / DSM 1896 / JCM 5824 / BCRC 10623 / CCUG 4943 / NCTC 11153).